Consider the following 391-residue polypeptide: Multidrug resistance protein MdtL (391 aa).

The next 12 membrane-spanning stretches (helical) occupy residues Phe-4–Val-24, Ile-42–Ala-62, Pro-69–Glu-89, Leu-93–Phe-113, Leu-131–Met-151, Ser-158–Leu-178, Phe-203–Val-222, Ala-245–Phe-265, Thr-269–Pro-289, Ile-293–Met-313, Ala-324–Ala-346, and Ala-363–Ala-383.

This sequence belongs to the major facilitator superfamily. DHA1 family. MdtL (TC 2.A.1.2.22) subfamily.

It is found in the cell inner membrane. Confers resistance to chloramphenicol. This Escherichia fergusonii (strain ATCC 35469 / DSM 13698 / CCUG 18766 / IAM 14443 / JCM 21226 / LMG 7866 / NBRC 102419 / NCTC 12128 / CDC 0568-73) protein is Multidrug resistance protein MdtL.